Here is a 249-residue protein sequence, read N- to C-terminus: Probable transcriptional regulatory protein FN1661 (249 aa).

The span at Met1 to Ile10 shows a compositional bias: polar residues. The interval Met1 to Lys20 is disordered.

The protein belongs to the TACO1 family.

It is found in the cytoplasm. The protein is Probable transcriptional regulatory protein FN1661 of Fusobacterium nucleatum subsp. nucleatum (strain ATCC 25586 / DSM 15643 / BCRC 10681 / CIP 101130 / JCM 8532 / KCTC 2640 / LMG 13131 / VPI 4355).